A 360-amino-acid polypeptide reads, in one-letter code: Phospho-N-acetylmuramoyl-pentapeptide-transferase (360 aa).

Topologically, residues 1–25 (MLVWLAEHLVKYYSGFNVFSYLTFR) are periplasmic. The chain crosses the membrane as a helical span at residues 26 to 46 (AIVSLLTALFISLWMGPRMIA). The Cytoplasmic portion of the chain corresponds to 47–71 (HLQKLSFGQVVRNDGPESHFSKRGT). Residues 72–92 (PTMGGIMILTAIVISVLLWAY) form a helical membrane-spanning segment. Proline 93 is a topological domain (periplasmic). A helical membrane pass occupies residues 94 to 114 (SNPYVWCVLVVLVGYGVIGFV). Residues 115 to 131 (DDYRKVVRKDTKGLIAR) are Cytoplasmic-facing. A helical transmembrane segment spans residues 132-152 (WKYFWMSVIALGVAFALYLVG). Topologically, residues 153-167 (KDTPATQLVVPFFKD) are periplasmic. Residues 168–188 (VMPQLGLFYILLAYFVIVGTG) form a helical membrane-spanning segment. The Cytoplasmic segment spans residues 189–198 (NAVNLTDGLD). The helical transmembrane segment at 199–219 (GLAIMPTVFVAGGFALVAWAT) threads the bilayer. At 220 to 235 (GNMNFASYLHIPYLRH) the chain is on the periplasmic side. The chain crosses the membrane as a helical span at residues 236 to 256 (AGELVIVCTAIVGAGLGFLWF). The Cytoplasmic segment spans residues 257–262 (NTYPAQ). Residues 263-283 (VFMGDVGSLALGGALGIIAVL) form a helical membrane-spanning segment. Over 284–287 (LRQE) the chain is Periplasmic. The helical transmembrane segment at 288–308 (FLLVIMGGVFVVETLSVILQV) threads the bilayer. The Cytoplasmic segment spans residues 309 to 337 (GSFKLRGQRIFRMAPIHHHYELKGWPEPR). A helical transmembrane segment spans residues 338 to 358 (VIVRFWIISLMLVLIGLATLK). Over 359–360 (VR) the chain is Periplasmic.

It belongs to the glycosyltransferase 4 family. MraY subfamily. Mg(2+) is required as a cofactor.

Its subcellular location is the cell inner membrane. It catalyses the reaction UDP-N-acetyl-alpha-D-muramoyl-L-alanyl-gamma-D-glutamyl-meso-2,6-diaminopimeloyl-D-alanyl-D-alanine + di-trans,octa-cis-undecaprenyl phosphate = di-trans,octa-cis-undecaprenyl diphospho-N-acetyl-alpha-D-muramoyl-L-alanyl-D-glutamyl-meso-2,6-diaminopimeloyl-D-alanyl-D-alanine + UMP. It participates in cell wall biogenesis; peptidoglycan biosynthesis. In terms of biological role, catalyzes the initial step of the lipid cycle reactions in the biosynthesis of the cell wall peptidoglycan: transfers peptidoglycan precursor phospho-MurNAc-pentapeptide from UDP-MurNAc-pentapeptide onto the lipid carrier undecaprenyl phosphate, yielding undecaprenyl-pyrophosphoryl-MurNAc-pentapeptide, known as lipid I. The sequence is that of Phospho-N-acetylmuramoyl-pentapeptide-transferase from Escherichia coli O157:H7.